The following is a 642-amino-acid chain: Threonine--tRNA ligase (642 aa).

Residues 1-61 (MPVITLPDGS…ETDAELSIIT (61 aa)) form the TGS domain. A catalytic region spans residues 243-534 (DHRKIGKQLD…LIEEYAGRFP (292 aa)). Positions 334, 385, and 511 each coordinate Zn(2+).

It belongs to the class-II aminoacyl-tRNA synthetase family. Homodimer. It depends on Zn(2+) as a cofactor.

Its subcellular location is the cytoplasm. The enzyme catalyses tRNA(Thr) + L-threonine + ATP = L-threonyl-tRNA(Thr) + AMP + diphosphate + H(+). Functionally, catalyzes the attachment of threonine to tRNA(Thr) in a two-step reaction: L-threonine is first activated by ATP to form Thr-AMP and then transferred to the acceptor end of tRNA(Thr). Also edits incorrectly charged L-seryl-tRNA(Thr). This is Threonine--tRNA ligase from Shewanella sp. (strain MR-7).